Here is a 173-residue protein sequence, read N- to C-terminus: Alpha-crystallin A chain (173 aa).

At Met1 the chain carries N-acetylmethionine. Positions 1-63 (MDIAIQHPWF…RTVLDSGISE (63 aa)) are required for complex formation with BFSP1 and BFSP2. Gln6 is modified (deamidated glutamine; partial). Ser45 carries the post-translational modification Phosphoserine. A Deamidated glutamine; partial modification is found at Gln50. The sHSP domain occupies 52–162 (LFRTVLDSGI…GHSERAIPVS (111 aa)). Lys70 is subject to N6-acetyllysine. Gln90 carries the deamidated glutamine; partial modification. At Lys99 the chain carries N6-acetyllysine. Residue His100 participates in Zn(2+) binding. Asn101 is modified (deamidated asparagine; partial). Zn(2+)-binding residues include Glu102 and His107. A Phosphoserine modification is found at Ser122. Deamidated asparagine; partial is present on Asn123. Positions 144–173 (PKVPSGMDAGHSERAIPVSREEKPSSAPSS) are disordered. The segment covering 153–167 (GHSERAIPVSREEKP) has biased composition (basic and acidic residues). Position 154 (His154) interacts with Zn(2+). An O-linked (GlcNAc) serine glycan is attached at Ser162.

The protein belongs to the small heat shock protein (HSP20) family. As to quaternary structure, heteromer composed of three CRYAA and one CRYAB subunits. Inter-subunit bridging via zinc ions enhances stability, which is crucial as there is no protein turn over in the lens. Can also form homodimers and homotetramers (dimers of dimers) which serve as the building blocks of homooligomers. Within homooligomers, the zinc-binding motif is created from residues of 3 different molecules. His-100 and Glu-102 from one molecule are ligands of the zinc ion, and His-107 and His-154 residues from additional molecules complete the site with tetrahedral coordination geometry. Part of a complex required for lens intermediate filament formation composed of BFSP1, BFSP2 and CRYAA. Acetylation at Lys-70 may increase chaperone activity. Post-translationally, undergoes age-dependent proteolytical cleavage at the C-terminus.

The protein localises to the cytoplasm. It localises to the nucleus. Contributes to the transparency and refractive index of the lens. Acts as a chaperone, preventing aggregation of various proteins under a wide range of stress conditions. Required for the correct formation of lens intermediate filaments as part of a complex composed of BFSP1, BFSP2 and CRYAA. This Balaenoptera acutorostrata (Common minke whale) protein is Alpha-crystallin A chain (CRYAA).